Reading from the N-terminus, the 304-residue chain is Aspartate carbamoyltransferase catalytic subunit (304 aa).

Carbamoyl phosphate is bound by residues Arg-49 and Thr-50. Position 77 (Lys-77) interacts with L-aspartate. Carbamoyl phosphate contacts are provided by Arg-99, His-127, and Gln-130. Residues Arg-160 and Arg-211 each contribute to the L-aspartate site. Carbamoyl phosphate contacts are provided by Ala-250 and Pro-251. Residue Ser-303 is modified to Phosphoserine.

The protein belongs to the aspartate/ornithine carbamoyltransferase superfamily. ATCase family. Heterododecamer (2C3:3R2) of six catalytic PyrB chains organized as two trimers (C3), and six regulatory PyrI chains organized as three dimers (R2).

It carries out the reaction carbamoyl phosphate + L-aspartate = N-carbamoyl-L-aspartate + phosphate + H(+). The protein operates within pyrimidine metabolism; UMP biosynthesis via de novo pathway; (S)-dihydroorotate from bicarbonate: step 2/3. Catalyzes the condensation of carbamoyl phosphate and aspartate to form carbamoyl aspartate and inorganic phosphate, the committed step in the de novo pyrimidine nucleotide biosynthesis pathway. This is Aspartate carbamoyltransferase catalytic subunit from Bacillus subtilis (strain 168).